The sequence spans 101 residues: Protein Tat (101 aa).

Over residues 1-12 (MDPVDPRLEPWK) the composition is skewed to basic and acidic residues. The interval 1–20 (MDPVDPRLEPWKHPGSQPKA) is disordered. The segment at 1-24 (MDPVDPRLEPWKHPGSQPKAACTS) is interaction with human CREBBP. Residues 1-48 (MDPVDPRLEPWKHPGSQPKAACTSCYCKKCCFHCQVCFTTKGLGISYG) form a transactivation region. Residues C22, C25, and C27 each contribute to the Zn(2+) site. The cysteine-rich stretch occupies residues 22-37 (CTSCYCKKCCFHCQVC). Position 28 is an N6-acetyllysine; by host PCAF (K28). 4 residues coordinate Zn(2+): C30, H33, C34, and C37. The tract at residues 38–48 (FTTKGLGISYG) is core. Residues 48-57 (GRKKRRQRRR) show a composition bias toward basic residues. A disordered region spans residues 48–101 (GRKKRRQRRRAPQDSQTHQVSLPKQPASQARGDPTGPKESKKKVERETETDPVD). The Nuclear localization signal, RNA-binding (TAR), and protein transduction motif lies at 49-57 (RKKRRQRRR). The segment at 49–86 (RKKRRQRRRAPQDSQTHQVSLPKQPASQARGDPTGPKE) is interaction with the host capping enzyme RNGTT. K50 and K51 each carry N6-acetyllysine; by host EP300 and GCN5L2. Asymmetric dimethylarginine; by host PRMT6 occurs at positions 52 and 53. Positions 60–75 (QDSQTHQVSLPKQPAS) are enriched in polar residues. Residue K71 forms a Glycyl lysine isopeptide (Lys-Gly) (interchain with G-Cter in ubiquitin) linkage. The short motif at 78-80 (RGD) is the Cell attachment site element. Positions 83–101 (GPKESKKKVERETETDPVD) are enriched in basic and acidic residues.

It belongs to the lentiviruses Tat family. In terms of assembly, interacts with host CCNT1. Associates with the P-TEFb complex composed at least of Tat, P-TEFb (CDK9 and CCNT1), TAR RNA, RNA Pol II. Recruits the HATs CREBBP, TAF1/TFIID, EP300, PCAF and GCN5L2. Interacts with host KAT5/Tip60; this interaction targets the latter to degradation. Interacts with the host deacetylase SIRT1. Interacts with host capping enzyme RNGTT; this interaction stimulates RNGTT. Binds to host KDR, and to the host integrins ITGAV/ITGB3 and ITGA5/ITGB1. Interacts with host KPNB1/importin beta-1 without previous binding to KPNA1/importin alpha-1. Interacts with EIF2AK2. Interacts with host nucleosome assembly protein NAP1L1; this interaction may be required for the transport of Tat within the nucleus, since the two proteins interact at the nuclear rim. Interacts with host C1QBP/SF2P32; this interaction involves lysine-acetylated Tat. Interacts with the host chemokine receptors CCR2, CCR3 and CXCR4. Interacts with host DPP4/CD26; this interaction may trigger an anti-proliferative effect. Interacts with host LDLR. Interacts with the host extracellular matrix metalloproteinase MMP1. Interacts with host PRMT6; this interaction mediates Tat's methylation. Interacts with, and is ubiquitinated by MDM2/Hdm2. Interacts with host PSMC3 and HTATIP2. Interacts with STAB1; this interaction may overcome SATB1-mediated repression of IL2 and IL2RA (interleukin) in T cells by binding to the same domain than HDAC1. Interacts (when acetylated) with human CDK13, thereby increasing HIV-1 mRNA splicing and promoting the production of the doubly spliced HIV-1 protein Nef. Interacts with host TBP; this interaction modulates the activity of transcriptional pre-initiation complex. Interacts with host RELA. Interacts with host PLSCR1; this interaction negatively regulates Tat transactivation activity by altering its subcellular distribution. Asymmetrical arginine methylation by host PRMT6 seems to diminish the transactivation capacity of Tat and affects the interaction with host CCNT1. In terms of processing, acetylation by EP300, CREBBP, GCN5L2/GCN5 and PCAF regulates the transactivation activity of Tat. EP300-mediated acetylation of Lys-50 promotes dissociation of Tat from the TAR RNA through the competitive binding to PCAF's bromodomain. In addition, the non-acetylated Tat's N-terminus can also interact with PCAF. PCAF-mediated acetylation of Lys-28 enhances Tat's binding to CCNT1. Lys-50 is deacetylated by SIRT1. Post-translationally, polyubiquitination by host MDM2 does not target Tat to degradation, but activates its transactivation function and fosters interaction with CCNT1 and TAR RNA. Phosphorylated by EIF2AK2 on serine and threonine residues adjacent to the basic region important for TAR RNA binding and function. Phosphorylation of Tat by EIF2AK2 is dependent on the prior activation of EIF2AK2 by dsRNA.

The protein localises to the host nucleus. The protein resides in the host nucleolus. Its subcellular location is the host cytoplasm. It localises to the secreted. Functionally, transcriptional activator that increases RNA Pol II processivity, thereby increasing the level of full-length viral transcripts. Recognizes a hairpin structure at the 5'-LTR of the nascent viral mRNAs referred to as the transactivation responsive RNA element (TAR) and recruits the cyclin T1-CDK9 complex (P-TEFb complex) that will in turn hyperphosphorylate the RNA polymerase II to allow efficient elongation. The CDK9 component of P-TEFb and other Tat-activated kinases hyperphosphorylate the C-terminus of RNA Pol II that becomes stabilized and much more processive. Other factors such as HTATSF1/Tat-SF1, SUPT5H/SPT5, and HTATIP2 are also important for Tat's function. Besides its effect on RNA Pol II processivity, Tat induces chromatin remodeling of proviral genes by recruiting the histone acetyltransferases (HATs) CREBBP, EP300 and PCAF to the chromatin. This also contributes to the increase in proviral transcription rate, especially when the provirus integrates in transcriptionally silent region of the host genome. To ensure maximal activation of the LTR, Tat mediates nuclear translocation of NF-kappa-B by interacting with host RELA. Through its interaction with host TBP, Tat may also modulate transcription initiation. Tat can reactivate a latently infected cell by penetrating in it and transactivating its LTR promoter. In the cytoplasm, Tat is thought to act as a translational activator of HIV-1 mRNAs. In terms of biological role, extracellular circulating Tat can be endocytosed by surrounding uninfected cells via the binding to several surface receptors such as CD26, CXCR4, heparan sulfate proteoglycans (HSPG) or LDLR. Neurons are rarely infected, but they internalize Tat via their LDLR. Through its interaction with nuclear HATs, Tat is potentially able to control the acetylation-dependent cellular gene expression. Modulates the expression of many cellular genes involved in cell survival, proliferation or in coding for cytokines or cytokine receptors. Tat plays a role in T-cell and neurons apoptosis. Tat induced neurotoxicity and apoptosis probably contribute to neuroAIDS. Circulating Tat also acts as a chemokine-like and/or growth factor-like molecule that binds to specific receptors on the surface of the cells, affecting many cellular pathways. In the vascular system, Tat binds to ITGAV/ITGB3 and ITGA5/ITGB1 integrins dimers at the surface of endothelial cells and competes with bFGF for heparin-binding sites, leading to an excess of soluble bFGF. This chain is Protein Tat, found in Homo sapiens (Human).